The sequence spans 426 residues: Melibiose/raffinose/stachyose-binding protein MelE (426 aa).

Positions 1 to 18 are cleaved as a signal peptide; the sequence is MKHTFVLFLSLILLVLPG. Cys-19 carries the N-palmitoyl cysteine lipid modification. Residue Cys-19 is the site of S-diacylglycerol cysteine attachment.

It belongs to the bacterial solute-binding protein 1 family. The complex is composed of two ATP-binding proteins (MsmX), two transmembrane proteins (MelC and MelD) and a solute-binding protein (MelE).

The protein resides in the cell membrane. Functionally, part of the ABC transporter complex MelEDC-MsmX involved in melibiose, raffinose and stachyose import. Binds melibiose, raffinose and stachyose. This Bacillus subtilis (strain 168) protein is Melibiose/raffinose/stachyose-binding protein MelE.